The primary structure comprises 217 residues: 3-demethoxyubiquinol 3-hydroxylase (217 aa).

6 residues coordinate Fe cation: Glu-66, Glu-96, His-99, Glu-148, Glu-180, and His-183.

This sequence belongs to the COQ7 family. Requires Fe cation as cofactor.

It localises to the cell membrane. The catalysed reaction is a 5-methoxy-2-methyl-3-(all-trans-polyprenyl)benzene-1,4-diol + AH2 + O2 = a 3-demethylubiquinol + A + H2O. It functions in the pathway cofactor biosynthesis; ubiquinone biosynthesis. In terms of biological role, catalyzes the hydroxylation of 2-nonaprenyl-3-methyl-6-methoxy-1,4-benzoquinol during ubiquinone biosynthesis. The sequence is that of 3-demethoxyubiquinol 3-hydroxylase from Xanthomonas oryzae pv. oryzae (strain MAFF 311018).